The sequence spans 355 residues: Protein RecA (355 aa).

An ATP-binding site is contributed by 67 to 74 (GPESSGKT).

The protein belongs to the RecA family.

Its subcellular location is the cytoplasm. Its function is as follows. Can catalyze the hydrolysis of ATP in the presence of single-stranded DNA, the ATP-dependent uptake of single-stranded DNA by duplex DNA, and the ATP-dependent hybridization of homologous single-stranded DNAs. It interacts with LexA causing its activation and leading to its autocatalytic cleavage. The chain is Protein RecA from Histophilus somni (strain 129Pt) (Haemophilus somnus).